A 323-amino-acid polypeptide reads, in one-letter code: Pseudouridylate synthase TRUB2, mitochondrial (323 aa).

Asp-98 serves as the catalytic Nucleophile. Residues 302 to 323 form a disordered region; it reads SGHQQQLPSAGQPWASRVQAPL.

This sequence belongs to the pseudouridine synthase TruB family. In terms of assembly, forms a regulatory protein-RNA complex, consisting of RCC1L, NGRN, RPUSD3, RPUSD4, TRUB2, FASTKD2 and 16S mt-rRNA.

It is found in the mitochondrion matrix. It carries out the reaction a uridine in mRNA = a pseudouridine in mRNA. The enzyme catalyses uridine(55) in tRNA = pseudouridine(55) in tRNA. In terms of biological role, minor enzyme contributing to the isomerization of uridine to pseudouridine (pseudouridylation) of specific mitochondrial mRNAs (mt-mRNAs) such as COXI and COXIII mt-mRNAs. As a component of a functional protein-RNA module, consisting of RCC1L, NGRN, RPUSD3, RPUSD4, TRUB2, FASTKD2 and 16S mitochondrial ribosomal RNA (16S mt-rRNA), controls 16S mt-rRNA abundance and is required for intra-mitochondrial translation. Also catalyzes pseudouridylation of some tRNAs, including synthesis of pseudouridine(55) from uracil-55, in the psi GC loop of a subset of tRNAs. The protein is Pseudouridylate synthase TRUB2, mitochondrial of Rattus norvegicus (Rat).